The following is a 1456-amino-acid chain: RNA replication protein (1456 aa).

The Alphavirus-like MT domain occupies 59–224 (NPYSIELHTH…HHEFSHLQWL (166 aa)). The interval 537-573 (MRAEGEAESNEMSGGMGAIPSNAELPSTSGARQELTL) is disordered. A compositionally biased stretch (polar residues) spans 560–573 (ELPSTSGARQELTL). Positions 695–862 (DVKNKRIGAI…YFSKYCRYYL (168 aa)) constitute a (+)RNA virus helicase ATP-binding domain. 735–742 (GAGGSGKS) is a binding site for ATP. One can recognise a (+)RNA virus helicase C-terminal domain in the interval 863-997 (NATHRNKKDL…VVREQALKEY (135 aa)). The RdRp catalytic domain maps to 1236-1343 (RPSLANDYTA…DCVPEVKHSF (108 aa)).

It belongs to the potexvirus/carlavirus RNA replication protein family.

The enzyme catalyses RNA(n) + a ribonucleoside 5'-triphosphate = RNA(n+1) + diphosphate. It carries out the reaction ATP + H2O = ADP + phosphate + H(+). In terms of biological role, RNA replication. The central part of this protein possibly functions as an ATP-binding helicase. The polypeptide is RNA replication protein (Potato virus X (PVX)).